A 2587-amino-acid polypeptide reads, in one-letter code: Protein KINKY POLLEN (2587 aa).

Residues 1–27 form the signal peptide; the sequence is MAAFLVMFIFTIALFVALLWVFFKSLP. N-linked (GlcNAc...) asparagine glycosylation is present at N71. The disordered stretch occupies residues 103–124; the sequence is PSHSSKGPRKPKTRKSSSGGKG. A compositionally biased stretch (basic residues) spans 108-117; sequence KGPRKPKTRK. N-linked (GlcNAc...) asparagine glycans are attached at residues N262, N281, and N485. The segment at 270 to 290 is disordered; it reads SKGEVIDSSSGNTTSEKPPKQ. The span at 276–285 shows a compositional bias: polar residues; sequence DSSSGNTTSE. Residues 589–611 form a disordered region; it reads GSSSKNKQEKGAHRSKPPSGRGT. The stretch at 691–716 forms a coiled coil; the sequence is TLNKEIQSTQVELETAKAIYQEFLEE. Residues 784-814 form a disordered region; it reads QHGNRNPEEASTVTGDKQKEEPTTTPNSLDK. Residues N1155, N1250, N1281, and N1486 are each glycosylated (N-linked (GlcNAc...) asparagine). Disordered stretches follow at residues 1571–1608, 1646–1673, and 1729–1797; these read HCSK…KHPD, VDAR…DGYN, and EGNQ…PEEE. The segment covering 1576–1590 has biased composition (polar residues); it reads AQMSRTSSLSGSTDR. An N-linked (GlcNAc...) asparagine glycan is attached at N1595. Positions 1646 to 1666 are enriched in basic and acidic residues; sequence VDARSTKEKQSEPEENSHSDP. The span at 1746–1760 shows a compositional bias: polar residues; that stretch reads KQPSTGSGNLASQSK. N-linked (GlcNAc...) asparagine glycans are attached at residues N1861, N1951, N1981, N2036, and N2278. The stretch at 2006–2036 forms a coiled coil; sequence IEEVELAKIELEAKERDRMMLLDDIRKLTQN. Residues 2274 to 2287 show a composition bias toward polar residues; the sequence is QGSKNQSLKSSTIR. 3 disordered regions span residues 2274 to 2299, 2319 to 2360, and 2442 to 2469; these read QGSK…TSSF, SMEH…KKSR, and KDDI…RPGD. Composition is skewed to basic and acidic residues over residues 2289 to 2299, 2322 to 2336, 2343 to 2359, and 2442 to 2458; these read SGRELRRTSSF, HQGE…DSKT, SVHE…DKKS, and KDDI…RTDQ. N-linked (GlcNAc...) asparagine glycosylation is found at N2513 and N2544. Positions 2533–2587 are disordered; the sequence is IRRHSKKFQNQNTTKGSKKTQLSPTLSPPKEEDQYESDSSSGSSAYEEFLDQNQI. Over residues 2540-2557 the composition is skewed to polar residues; that stretch reads FQNQNTTKGSKKTQLSPT. Low complexity predominate over residues 2569–2579; the sequence is SDSSSGSSAYE.

It belongs to the SABRE family. As to expression, mostly expressed in pollen and roots, especially in tip-growing cells, but also present in seedlings, stems, leaves, buds, flowers, siliques and seeds.

The protein resides in the secreted. Its subcellular location is the golgi apparatus. Its function is as follows. May be involved in membrane trafficking. Required for tip growth in pollen tubes and root hairs. The chain is Protein KINKY POLLEN from Arabidopsis thaliana (Mouse-ear cress).